We begin with the raw amino-acid sequence, 329 residues long: MQGSVTEFLKPRLVDIEQVNPTRAKVTLEPLERGFGHTLGNALRRILLSSMPGCAVTEVEIDGVLHEYSSKEGVQEDILEILLNLKGLAVVIEGKDEAMLTLSKSGAGPVTAADITHDGDVTIMNPDHVICHLTGNNDISMRIRVERGRGYVPASARAQTEDDDRPIGRLLVDSSFSPVARIAYNVEAARVEQRTDLDKLVIDMTTNGTIDPEEAIRRSATILAEQLDAFVELRDVTEPEQKEEKPEFDPILLRPVDDLELTVRSANCLKAEAIHYIGDLVQRTEVELLKTPNLGKKSLTEIKDVLASRGLSLGMRLENWPPASLADDL.

Residues 1–234 are alpha N-terminal domain (alpha-NTD); that stretch reads MQGSVTEFLK…EQLDAFVELR (234 aa). Residues 248–329 form an alpha C-terminal domain (alpha-CTD) region; it reads FDPILLRPVD…WPPASLADDL (82 aa).

Belongs to the RNA polymerase alpha chain family. As to quaternary structure, homodimer. The RNAP catalytic core consists of 2 alpha, 1 beta, 1 beta' and 1 omega subunit. When a sigma factor is associated with the core the holoenzyme is formed, which can initiate transcription.

It carries out the reaction RNA(n) + a ribonucleoside 5'-triphosphate = RNA(n+1) + diphosphate. Its function is as follows. DNA-dependent RNA polymerase catalyzes the transcription of DNA into RNA using the four ribonucleoside triphosphates as substrates. The chain is DNA-directed RNA polymerase subunit alpha from Shewanella loihica (strain ATCC BAA-1088 / PV-4).